The chain runs to 180 residues: Large ribosomal subunit protein uL5c (180 aa).

The protein belongs to the universal ribosomal protein uL5 family. As to quaternary structure, part of the 50S ribosomal subunit; contacts the 5S rRNA.

Its subcellular location is the plastid. The protein resides in the chloroplast. Its function is as follows. Binds 5S rRNA, forms part of the central protuberance of the 50S subunit. This is Large ribosomal subunit protein uL5c (rpl5) from Chlorella vulgaris (Green alga).